We begin with the raw amino-acid sequence, 365 residues long: Histidinol-phosphate aminotransferase (365 aa).

The residue at position 220 (K220) is an N6-(pyridoxal phosphate)lysine.

This sequence belongs to the class-II pyridoxal-phosphate-dependent aminotransferase family. Histidinol-phosphate aminotransferase subfamily. In terms of assembly, homodimer. Requires pyridoxal 5'-phosphate as cofactor.

It carries out the reaction L-histidinol phosphate + 2-oxoglutarate = 3-(imidazol-4-yl)-2-oxopropyl phosphate + L-glutamate. It functions in the pathway amino-acid biosynthesis; L-histidine biosynthesis; L-histidine from 5-phospho-alpha-D-ribose 1-diphosphate: step 7/9. This is Histidinol-phosphate aminotransferase from Neisseria meningitidis serogroup B (strain ATCC BAA-335 / MC58).